The chain runs to 641 residues: Threonine--tRNA ligase (641 aa).

The TGS domain occupies 1–61 (MPAITLPDGS…ADDASVRFIT (61 aa)). The tract at residues 243 to 536 (DHRRIGREMD…LIEQHAGRFP (294 aa)) is catalytic. Zn(2+) is bound by residues C336, H387, and H513.

The protein belongs to the class-II aminoacyl-tRNA synthetase family. As to quaternary structure, homodimer. The cofactor is Zn(2+).

The protein resides in the cytoplasm. It catalyses the reaction tRNA(Thr) + L-threonine + ATP = L-threonyl-tRNA(Thr) + AMP + diphosphate + H(+). In terms of biological role, catalyzes the attachment of threonine to tRNA(Thr) in a two-step reaction: L-threonine is first activated by ATP to form Thr-AMP and then transferred to the acceptor end of tRNA(Thr). Also edits incorrectly charged L-seryl-tRNA(Thr). The chain is Threonine--tRNA ligase from Gluconacetobacter diazotrophicus (strain ATCC 49037 / DSM 5601 / CCUG 37298 / CIP 103539 / LMG 7603 / PAl5).